The primary structure comprises 395 residues: Endophilin-B2 (395 aa).

Met-1 carries the post-translational modification N-acetylmethionine. A membrane-binding amphipathic helix region spans residues 1–27 (MDFNMKKLASDAGIFFTRAVQFTEEKF). Ser-10 carries the post-translational modification Phosphoserine. One can recognise a BAR domain in the interval 24-287 (EEKFGQAEKT…LGRFPGTFVG (264 aa)). 2 coiled-coil regions span residues 116–132 (IKVA…ERDF) and 206–240 (ASAL…LLLE). The SH3 domain maps to 335-395 (SGTRKARVLY…VPVTYLELLS (61 aa)). At Ser-395 the chain carries Phosphoserine.

It belongs to the endophilin family. Homodimer, and heterodimer with SH3GLB1. As to expression, detected in skeletal muscle, adipocyte, brain, lung, colon and mammary gland.

It is found in the cytoplasm. This chain is Endophilin-B2 (SH3GLB2), found in Homo sapiens (Human).